Reading from the N-terminus, the 83-residue chain is Host transcription reprogramming factor 9 (83 aa).

Residues 1–19 (MQFSKITLAIVLYALGTAA) form the signal peptide. The C2H2-type zinc finger occupies 54-77 (YRCDKCEKEFVKGNDFFNHGGRGH).

It is found in the secreted. The protein resides in the host nucleus. In terms of biological role, probable secreted effector that translocates into the nuclei of host cells to reprogram the expression of targeted genes by binding on effector binding elements in rice. This Pyricularia oryzae (strain 70-15 / ATCC MYA-4617 / FGSC 8958) (Rice blast fungus) protein is Host transcription reprogramming factor 9.